We begin with the raw amino-acid sequence, 831 residues long: Glycerol-3-phosphate acyltransferase (831 aa).

The HXXXXD motif signature appears at 304–309 (CHRSHM). Residues 801-831 (VSMPAETSNQPEAPETPETPETPEPEGKTES) are disordered.

This sequence belongs to the GPAT/DAPAT family.

It localises to the cell inner membrane. The enzyme catalyses sn-glycerol 3-phosphate + an acyl-CoA = a 1-acyl-sn-glycero-3-phosphate + CoA. Its pathway is phospholipid metabolism; CDP-diacylglycerol biosynthesis; CDP-diacylglycerol from sn-glycerol 3-phosphate: step 1/3. This chain is Glycerol-3-phosphate acyltransferase, found in Yersinia pseudotuberculosis serotype IB (strain PB1/+).